Reading from the N-terminus, the 471-residue chain is Glutamate--tRNA ligase 1 (471 aa).

Positions 15–25 match the 'HIGH' region motif; that stretch reads PSPTGYLHIGG. The 'KMSKS' region motif lies at 243–247; the sequence is KLSKR. Lys-246 serves as a coordination point for ATP.

This sequence belongs to the class-I aminoacyl-tRNA synthetase family. Glutamate--tRNA ligase type 1 subfamily. Monomer.

It is found in the cytoplasm. The enzyme catalyses tRNA(Glu) + L-glutamate + ATP = L-glutamyl-tRNA(Glu) + AMP + diphosphate. In terms of biological role, catalyzes the attachment of glutamate to tRNA(Glu) in a two-step reaction: glutamate is first activated by ATP to form Glu-AMP and then transferred to the acceptor end of tRNA(Glu). This Dinoroseobacter shibae (strain DSM 16493 / NCIMB 14021 / DFL 12) protein is Glutamate--tRNA ligase 1.